A 401-amino-acid polypeptide reads, in one-letter code: Argininosuccinate synthase (401 aa).

ATP-binding positions include 7–15 (AYSGGLDTS) and A34. Residues Y85 and S90 each coordinate L-citrulline. G115 is a binding site for ATP. L-aspartate-binding residues include T117, N121, and D122. Position 121 (N121) interacts with L-citrulline. 5 residues coordinate L-citrulline: R125, S174, S183, E259, and Y271.

Belongs to the argininosuccinate synthase family. Type 1 subfamily. In terms of assembly, homotetramer.

It localises to the cytoplasm. The catalysed reaction is L-citrulline + L-aspartate + ATP = 2-(N(omega)-L-arginino)succinate + AMP + diphosphate + H(+). It participates in amino-acid biosynthesis; L-arginine biosynthesis; L-arginine from L-ornithine and carbamoyl phosphate: step 2/3. This chain is Argininosuccinate synthase, found in Desulforamulus reducens (strain ATCC BAA-1160 / DSM 100696 / MI-1) (Desulfotomaculum reducens).